A 502-amino-acid chain; its full sequence is Lysine--tRNA ligase (502 aa).

Mg(2+) is bound by residues glutamate 413 and glutamate 420.

It belongs to the class-II aminoacyl-tRNA synthetase family. As to quaternary structure, homodimer. It depends on Mg(2+) as a cofactor.

The protein localises to the cytoplasm. The enzyme catalyses tRNA(Lys) + L-lysine + ATP = L-lysyl-tRNA(Lys) + AMP + diphosphate. This chain is Lysine--tRNA ligase, found in Haemophilus influenzae (strain PittGG).